Reading from the N-terminus, the 522-residue chain is Glucose-1-phosphate adenylyltransferase large subunit, chloroplastic/amyloplastic (522 aa).

The N-terminal 62 residues, 1–62, are a transit peptide targeting the chloroplast; it reads MSSMQFSSVL…RGPAATGAQC (62 aa). The segment covering 28–42 has biased composition (basic and acidic residues); the sequence is SERLKVGDSSSIRHE. The segment at 28 to 54 is disordered; the sequence is SERLKVGDSSSIRHERASRRMCNGGRG.

Belongs to the bacterial/plant glucose-1-phosphate adenylyltransferase family. In terms of assembly, heterotetramer. In terms of tissue distribution, abundantly expressed in the whole grains, a slightly less abundant expression is seen in leaves, while a low level expression is seen in the roots. A greater expression is seen in the endosperm than in the embryo and pericarp layers.

The protein resides in the plastid. It localises to the chloroplast. Its subcellular location is the amyloplast. It catalyses the reaction alpha-D-glucose 1-phosphate + ATP + H(+) = ADP-alpha-D-glucose + diphosphate. It functions in the pathway glycan biosynthesis; starch biosynthesis. With respect to regulation, insensitive to 3'phosphoglycerate and orthophosphate. Its function is as follows. This protein plays a role in synthesis of starch. It catalyzes the synthesis of the activated glycosyl donor, ADP-glucose from Glc-1-P and ATP. This Triticum aestivum (Wheat) protein is Glucose-1-phosphate adenylyltransferase large subunit, chloroplastic/amyloplastic (AGP-L).